The chain runs to 729 residues: Pentatricopeptide repeat-containing protein At5g01110 (729 aa).

A disordered region spans residues 26-45 (TSSSPVFEPSSSSSSSSSSA). Over residues 27 to 45 (SSSPVFEPSSSSSSSSSSA) the composition is skewed to low complexity. PPR repeat units follow at residues 112–147 (TSLS…GVSR), 164–198 (NDSV…GFTV), 199–233 (SIDA…GVGI), 234–268 (NVYT…GVYP), 269–303 (DIVT…GFSP), 304–338 (GVYT…GLSP), 339–373 (DSTT…DVVP), 374–408 (DLVC…GLIP), 409–443 (DNVI…GCAM), 444–478 (DVVT…ALFP), 479–513 (DSYT…RIRL), 514–548 (DVVT…EILP), 549–583 (TPIS…NIKP), 584–618 (TVMI…GFVP), 619–649 (DCIS…MEEE), 656–690 (DVFT…GVNP), and 691–725 (DRST…GFSP).

It belongs to the PPR family. P subfamily.

This chain is Pentatricopeptide repeat-containing protein At5g01110, found in Arabidopsis thaliana (Mouse-ear cress).